A 433-amino-acid polypeptide reads, in one-letter code: Phosphoribosylamine--glycine ligase (433 aa).

Positions 111-317 (EFMARNNIKG…FVDICEAIVD (207 aa)) constitute an ATP-grasp domain. 138 to 194 (EDNPDVVVKPAGLTGGKGVKVMGEHMHTLEEAREYVKSVLEHDRVVIEERLKGEEVT) is an ATP binding site. 3 residues coordinate Mg(2+): glutamine 275, glutamate 287, and asparagine 289. Mn(2+)-binding residues include glutamine 275, glutamate 287, and asparagine 289.

It belongs to the GARS family. Mg(2+) serves as cofactor. The cofactor is Mn(2+).

It carries out the reaction 5-phospho-beta-D-ribosylamine + glycine + ATP = N(1)-(5-phospho-beta-D-ribosyl)glycinamide + ADP + phosphate + H(+). It functions in the pathway purine metabolism; IMP biosynthesis via de novo pathway; N(1)-(5-phospho-D-ribosyl)glycinamide from 5-phospho-alpha-D-ribose 1-diphosphate: step 2/2. The protein is Phosphoribosylamine--glycine ligase of Methanocella arvoryzae (strain DSM 22066 / NBRC 105507 / MRE50).